The following is a 223-amino-acid chain: uncharacterized protein (223 aa).

This is an uncharacterized protein from Acanthamoeba polyphaga (Amoeba).